The primary structure comprises 631 residues: Phosphomethylpyrimidine synthase (631 aa).

Substrate-binding positions include Asn239, Met268, Tyr297, His333, 353–355 (SRG), 394–397 (DGLR), and Glu433. His437 lines the Zn(2+) pocket. Substrate is bound at residue Tyr460. His501 contacts Zn(2+). Residues Cys581, Cys584, and Cys589 each coordinate [4Fe-4S] cluster.

It belongs to the ThiC family. In terms of assembly, homodimer. Requires [4Fe-4S] cluster as cofactor.

It carries out the reaction 5-amino-1-(5-phospho-beta-D-ribosyl)imidazole + S-adenosyl-L-methionine = 4-amino-2-methyl-5-(phosphooxymethyl)pyrimidine + CO + 5'-deoxyadenosine + formate + L-methionine + 3 H(+). It functions in the pathway cofactor biosynthesis; thiamine diphosphate biosynthesis. Functionally, catalyzes the synthesis of the hydroxymethylpyrimidine phosphate (HMP-P) moiety of thiamine from aminoimidazole ribotide (AIR) in a radical S-adenosyl-L-methionine (SAM)-dependent reaction. This is Phosphomethylpyrimidine synthase from Shigella boydii serotype 4 (strain Sb227).